We begin with the raw amino-acid sequence, 383 residues long: 8-amino-7-oxononanoate synthase (383 aa).

Residues arginine 27 and arginine 34 each coordinate substrate. Pyridoxal 5'-phosphate is bound at residue 114–115 (GY). Histidine 139 contacts substrate. Pyridoxal 5'-phosphate-binding positions include serine 187, 212-215 (DDAH), and 232-235 (TLSK). Lysine 235 bears the N6-(pyridoxal phosphate)lysine mark. Substrate is bound at residue threonine 344.

The protein belongs to the class-II pyridoxal-phosphate-dependent aminotransferase family. BioF subfamily. As to quaternary structure, homodimer. Requires pyridoxal 5'-phosphate as cofactor.

The enzyme catalyses 6-carboxyhexanoyl-[ACP] + L-alanine + H(+) = (8S)-8-amino-7-oxononanoate + holo-[ACP] + CO2. It participates in cofactor biosynthesis; biotin biosynthesis. Functionally, catalyzes the decarboxylative condensation of pimeloyl-[acyl-carrier protein] and L-alanine to produce 8-amino-7-oxononanoate (AON), [acyl-carrier protein], and carbon dioxide. The sequence is that of 8-amino-7-oxononanoate synthase from Methylorubrum extorquens (strain CM4 / NCIMB 13688) (Methylobacterium extorquens).